Consider the following 2605-residue polypeptide: Non-reducing polyketide synthase dbaI (2605 aa).

The N-terminal acylcarrier protein transacylase domain (SAT) stretch occupies residues 97–243; it reads PNTLLIPLVM…PASEISDLHR (147 aa). The Nucleophile; for transacylase activity role is filled by Cys144. His262 serves as the catalytic Proton donor/acceptor; for transacylase activity. The Ketosynthase family 3 (KS3) domain occupies 382-798; the sequence is ENDIAVVGMS…GSNASIVVTQ (417 aa). Catalysis depends on for beta-ketoacyl synthase activity residues Cys547, His682, and His721. The interval 908-1195 is malonyl-CoA:ACP transacylase (MAT) domain; it reads FGGQVSTFVG…VTNMASRALG (288 aa). The N-terminal hotdog fold stretch occupies residues 1285-1420; it reads PNTLLTFVGY…GRVIFRSISD (136 aa). In terms of domain architecture, PKS/mFAS DH spans 1285-1596; sequence PNTLLTFVGY…YVKIPKASMS (312 aa). The segment at 1316–1594 is product template (PT) domain; the sequence is LIRGHIIAQT…ISYVKIPKAS (279 aa). Residue His1320 is the Proton acceptor; for dehydratase activity of the active site. Residues 1447 to 1596 form a C-terminal hotdog fold region; sequence EVDEVLQNRN…YVKIPKASMS (150 aa). Catalysis depends on Asp1504, which acts as the Proton donor; for dehydratase activity. The region spanning 1665-1739 is the Carrier domain; that stretch reads GQLTQRIKSI…SLIKCVRKAM (75 aa). The residue at position 1699 (Ser1699) is an O-(pantetheine 4'-phosphoryl)serine. A disordered region spans residues 1742–1780; it reads DADSAEYTTEQSTSEAADSDDKSTNYTTPSTPGEEALDM. Polar residues predominate over residues 1747–1757; it reads EYTTEQSTSEA. The tract at residues 1963–2151 is methyltransferase domain; it reads DWPLNRLFYR…VGYGHVDWTD (189 aa). The NADPH-binding (R) domain stretch occupies residues 2230 to 2473; that stretch reads VTGATGSLGC…LSWTPVDVVA (244 aa).

The enzyme catalyses 4 malonyl-CoA + acetyl-CoA + AH2 + S-adenosyl-L-methionine + 3 H(+) = 2,4-dihydroxy-3-methyl-6-(2-oxopropyl)benzaldehyde + A + S-adenosyl-L-homocysteine + 4 CO2 + 5 CoA + H2O. The protein operates within secondary metabolite biosynthesis. Non-reducing polyketide synthase; part of the gene cluster that mediates the biosynthesis of the antibiotic 2,4-dihydroxy-3-methyl-6-(2-oxopropyl)benzaldehyde (DHMBA) and its derivatives. The direct non-reducing polyketide synthase dbaI product is 2,4-dihydroxy-3-methyl-6-(2-oxopropyl)benzaldehyde (DHMBA), produced by condensation of one acetyl-CoA starter unit with 4 malonyl-CoA units and one methylation step. The FAD-dependent monooxygenase dbaH is responsible for the synthesis of yellow pigments derived from the oxidation of DHMBA. The roles of dbaB, C, E and F have still to be determined. This Emericella nidulans (strain FGSC A4 / ATCC 38163 / CBS 112.46 / NRRL 194 / M139) (Aspergillus nidulans) protein is Non-reducing polyketide synthase dbaI.